The following is a 153-amino-acid chain: UPF0756 membrane protein NT01CX_1209 (153 aa).

4 helical membrane-spanning segments follow: residues 5–25, 45–65, 83–103, and 113–133; these read IILL…LGIA, ENHF…IPII, IVCF…VGFL, and IILG…GPLI.

The protein belongs to the UPF0756 family.

It is found in the cell membrane. This Clostridium novyi (strain NT) protein is UPF0756 membrane protein NT01CX_1209.